We begin with the raw amino-acid sequence, 903 residues long: Zinc finger CCCH domain-containing protein 27 (903 aa).

The tract at residues 1-144 (MIKESSSPAL…GRNGAPWAQH (144 aa)) is disordered. Over residues 11–24 (DADKIEVPSPKDEN) the composition is skewed to basic and acidic residues. Residues 33–46 (TDNEDFEISDDDDD) are compositionally biased toward acidic residues. Residues 86–96 (SHGEAQKDFFP) are compositionally biased toward basic and acidic residues. Residues 225–253 (GMPRQRCRDFEERGFCLRGDMCPMEHGLN) form a C3H1-type zinc finger. The tract at residues 390-456 (ASKKLGHGKT…GRQSNRASHK (67 aa)) is disordered. Residues 397–410 (GKTANATSTSATGN) are compositionally biased toward low complexity. The segment covering 432–441 (KDSNGQSNSR) has biased composition (polar residues). Residues 459 to 531 (RTLYVNGIPL…RFIKLWWANR (73 aa)) form the RRM domain. 3 disordered regions span residues 545 to 609 (KSSH…DTKR), 642 to 720 (KQKG…QTSP), and 826 to 903 (TNHS…DVSQ). Over residues 556–576 (SVPQPSSSNRGKENLQSATPR) the composition is skewed to polar residues. Over residues 577–587 (ASSGSSAEASG) the composition is skewed to low complexity. Residues 608 to 649 (KRQESLELLEELRKKQEILAQKRDEFRRQLEKLAKQKGLANS) are a coiled coil. The span at 693–708 (SGELASSSHKSSATSA) shows a compositional bias: low complexity. A compositionally biased stretch (polar residues) spans 826 to 886 (TNHSRFQKTS…SMPTATSAKT (61 aa)).

In Oryza sativa subsp. japonica (Rice), this protein is Zinc finger CCCH domain-containing protein 27.